Reading from the N-terminus, the 114-residue chain is Large ribosomal subunit protein bL20 (114 aa).

Belongs to the bacterial ribosomal protein bL20 family.

Its function is as follows. Binds directly to 23S ribosomal RNA and is necessary for the in vitro assembly process of the 50S ribosomal subunit. It is not involved in the protein synthesizing functions of that subunit. The polypeptide is Large ribosomal subunit protein bL20 (Anaeromyxobacter dehalogenans (strain 2CP-1 / ATCC BAA-258)).